Here is a 1120-residue protein sequence, read N- to C-terminus: Probable leucine-rich repeat receptor-like protein kinase At1g35710 (1120 aa).

A signal peptide spans 1–29 (MGFAEKNLYDFRFLLFISIILSCSISASA). Topologically, residues 30–783 (TIAEANALLK…RELKKPKKNG (754 aa)) are extracellular. Residues asparagine 46, asparagine 60, asparagine 83, and asparagine 124 are each glycosylated (N-linked (GlcNAc...) asparagine). LRR repeat units follow at residues 78-100 (SIEE…PFIS), 103-125 (NLAY…FGNL), 127-150 (KLIY…GNLK), 151-172 (NLTV…ELGN), 175-198 (SMTD…GNLK), 199-221 (NLMV…LGNM), 223-246 (SMTD…GNLK), 247-269 (NLMV…IGNM), 271-294 (SMTN…GNLK), 295-317 (NLTL…LGNI), 319-342 (SMID…GNLK), 343-365 (NLTI…LGNM), 367-389 (SMID…FGNL), 391-412 (NLTY…ELGN), 415-437 (SMIN…FGNF), 439-461 (KLES…VANS), 463-484 (HLTT…TVCK), 487-510 (KLQN…RDCK), 535-557 (DLNF…WEKS), 559-581 (KLGA…IWNM), 583-605 (QLVE…IGNL), 607-630 (NLSR…SFLT), 631-652 (NLES…TFDS), 655-677 (KLHD…SKLT), 678-701 (QLTQ…SSLQ), 702-723 (SLDK…TFEG), and 726-748 (ALTN…PTFR). Residue asparagine 151 is glycosylated (N-linked (GlcNAc...) asparagine). An N-linked (GlcNAc...) asparagine glycan is attached at asparagine 295. Residue asparagine 343 is glycosylated (N-linked (GlcNAc...) asparagine). Residues asparagine 391, asparagine 436, asparagine 460, asparagine 473, and asparagine 490 are each glycosylated (N-linked (GlcNAc...) asparagine). N-linked (GlcNAc...) asparagine glycans are attached at residues asparagine 569, asparagine 580, asparagine 604, asparagine 607, asparagine 641, and asparagine 660. Asparagine 712 is a glycosylation site (N-linked (GlcNAc...) asparagine). The helical transmembrane segment at 784 to 804 (NLVVWILVPILGVLVILSICA) threads the bilayer. The Cytoplasmic portion of the chain corresponds to 805–1120 (NTFTYCIRKR…TMLSISTTFS (316 aa)). Threonine 848 is subject to Phosphothreonine. The 270-residue stretch at 851–1120 (FDPTHLIGTG…TMLSISTTFS (270 aa)) folds into the Protein kinase domain. Residues 857-865 (IGTGGYSKV) and lysine 878 contribute to the ATP site. Phosphotyrosine is present on residues tyrosine 929 and tyrosine 968. The active-site Proton acceptor is the aspartate 981. Residue serine 1014 is modified to Phosphoserine. Tyrosine 1022 and tyrosine 1029 each carry phosphotyrosine. Threonine 1030 carries the phosphothreonine modification.

The protein belongs to the protein kinase superfamily. Ser/Thr protein kinase family.

It localises to the membrane. It carries out the reaction L-seryl-[protein] + ATP = O-phospho-L-seryl-[protein] + ADP + H(+). The catalysed reaction is L-threonyl-[protein] + ATP = O-phospho-L-threonyl-[protein] + ADP + H(+). This Arabidopsis thaliana (Mouse-ear cress) protein is Probable leucine-rich repeat receptor-like protein kinase At1g35710.